The following is a 395-amino-acid chain: uncharacterized protein (395 aa).

Residues 247-270 (GGTVVPPNPDQPNPTPPDSSSPNY) are disordered. Pro residues predominate over residues 252-265 (PPNPDQPNPTPPDS).

This is an uncharacterized protein from Vibrio cholerae serotype O1 (strain ATCC 39315 / El Tor Inaba N16961).